The following is a 374-amino-acid chain: Chaperone protein DnaJ (374 aa).

The region spanning 5 to 70 (DYYEVLGVAR…DKRARYDRFG (66 aa)) is the J domain. Residues 135–213 (GDEVTLRLPK…CKGSGILQQV (79 aa)) form a CR-type zinc finger. Residues Cys-148, Cys-151, Cys-165, Cys-168, Cys-187, Cys-190, Cys-201, and Cys-204 each coordinate Zn(2+). CXXCXGXG motif repeat units follow at residues 148 to 155 (CDECNGSG), 165 to 172 (CRHCGGNG), 187 to 194 (CPVCRGEG), and 201 to 208 (CPKCKGSG).

This sequence belongs to the DnaJ family. In terms of assembly, homodimer. Zn(2+) serves as cofactor.

The protein resides in the cytoplasm. Functionally, participates actively in the response to hyperosmotic and heat shock by preventing the aggregation of stress-denatured proteins and by disaggregating proteins, also in an autonomous, DnaK-independent fashion. Unfolded proteins bind initially to DnaJ; upon interaction with the DnaJ-bound protein, DnaK hydrolyzes its bound ATP, resulting in the formation of a stable complex. GrpE releases ADP from DnaK; ATP binding to DnaK triggers the release of the substrate protein, thus completing the reaction cycle. Several rounds of ATP-dependent interactions between DnaJ, DnaK and GrpE are required for fully efficient folding. Also involved, together with DnaK and GrpE, in the DNA replication of plasmids through activation of initiation proteins. In Nitratidesulfovibrio vulgaris (strain DSM 19637 / Miyazaki F) (Desulfovibrio vulgaris), this protein is Chaperone protein DnaJ.